Consider the following 299-residue polypeptide: Glutamyl-Q tRNA(Asp) synthetase (299 aa).

Residues 9–13 (RFAPS) and E45 contribute to the L-glutamate site. The 'HIGH' region signature appears at 12-22 (PSPTGPLHFGS). Positions 101, 103, and 118 each coordinate Zn(2+). 2 residues coordinate L-glutamate: Y170 and R188. The short motif at 226–230 (KLSKS) is the 'KMSKS' region element. K229 lines the ATP pocket.

The protein belongs to the class-I aminoacyl-tRNA synthetase family. GluQ subfamily. Zn(2+) serves as cofactor.

Catalyzes the tRNA-independent activation of glutamate in presence of ATP and the subsequent transfer of glutamate onto a tRNA(Asp). Glutamate is transferred on the 2-amino-5-(4,5-dihydroxy-2-cyclopenten-1-yl) moiety of the queuosine in the wobble position of the QUC anticodon. This is Glutamyl-Q tRNA(Asp) synthetase from Xanthomonas axonopodis pv. citri (strain 306).